The primary structure comprises 326 residues: Zinc-dependent endopolyphosphatase (326 aa).

Over M1–A9 the chain is Cytoplasmic. A helical transmembrane segment spans residues A10–F30. At K31–S326 the chain is on the vacuolar side. N-linked (GlcNAc...) asparagine glycosylation is found at N90 and N241.

The protein belongs to the metallophosphoesterase superfamily. In terms of assembly, interacts with PPN1. Zn(2+) is required as a cofactor. Requires Co(2+) as cofactor. The cofactor is Mg(2+).

It localises to the vacuole membrane. It catalyses the reaction [phosphate](n+1) + n H2O = (n+1) phosphate + n H(+). With respect to regulation, not sensitive to heparin inhibition. In terms of biological role, catalyzes the hydrolysis of inorganic polyphosphate (polyP) chains of many hundreds of phosphate residues into shorter lengths. Exclusively shows endopolyphosphatase activity, cleaving inside the polyP chain. Together with PPN1, responsible for a substantial fraction of polyphosphatase activity that is necessary to mobilize polyP stores in response to phosphate scarcity. In Saccharomyces cerevisiae (strain ATCC 204508 / S288c) (Baker's yeast), this protein is Zinc-dependent endopolyphosphatase.